A 134-amino-acid polypeptide reads, in one-letter code: Small ribosomal subunit protein uS8c (134 aa).

Belongs to the universal ribosomal protein uS8 family. Part of the 30S ribosomal subunit.

It is found in the plastid. The protein resides in the chloroplast. Its function is as follows. One of the primary rRNA binding proteins, it binds directly to 16S rRNA central domain where it helps coordinate assembly of the platform of the 30S subunit. This chain is Small ribosomal subunit protein uS8c (rps8), found in Pelargonium hortorum (Common geranium).